The chain runs to 395 residues: Acid ceramidase (395 aa).

Residues M1 to A21 form the signal peptide. A disulfide bridge connects residues C31 and C340. The active-site Nucleophile is the C143. 4 N-linked (GlcNAc...) asparagine glycosylation sites follow: N195, N259, N286, and N342. The cysteines at positions 388 and 392 are disulfide-linked.

This sequence belongs to the acid ceramidase family. Heterodimer; disulfide-linked. The heterodimer is composed of the disulfide-linked alpha and beta chains produced by autocatalytic cleavage of the precursor. N-glycosylated. In terms of processing, proteolytically cleaved into two chains alpha and beta that remain associated via a disulfide bond. Cleavage gives rise to a conformation change that activates the enzyme. The same catalytic Cys residue mediates the autoproteolytic cleavage and subsequent hydrolysis of lipid substrates. The beta chain may undergo an additional C-terminal processing.

Its subcellular location is the lysosome. The protein resides in the secreted. The catalysed reaction is an N-acylsphing-4-enine + H2O = sphing-4-enine + a fatty acid. It carries out the reaction N-dodecanoylsphing-4-enine + H2O = dodecanoate + sphing-4-enine. The enzyme catalyses N-tetradecanoylsphing-4-enine + H2O = tetradecanoate + sphing-4-enine. It catalyses the reaction N-hexadecanoylsphing-4-enine + H2O = sphing-4-enine + hexadecanoate. The catalysed reaction is N-octadecanoylsphing-4-enine + H2O = sphing-4-enine + octadecanoate. It carries out the reaction N-dodecanoyl-(4R)-hydroxysphinganine + H2O = (4R)-hydroxysphinganine + dodecanoate. The enzyme catalyses N-(dodecanoyl)-sphinganine + H2O = dodecanoate + sphinganine. It catalyses the reaction N-(acetyl)-sphing-4-enine + H2O = sphing-4-enine + acetate. The catalysed reaction is N-(hexanoyl)sphing-4-enine + H2O = hexanoate + sphing-4-enine. It carries out the reaction N-octanoylsphing-4-enine + H2O = octanoate + sphing-4-enine. The enzyme catalyses N-(9Z-octadecenoyl)-sphing-4-enine + H2O = sphing-4-enine + (9Z)-octadecenoate. It catalyses the reaction N-dodecanoylethanolamine + H2O = dodecanoate + ethanolamine. Its pathway is lipid metabolism; sphingolipid metabolism. Lysosomal ceramidase that hydrolyzes sphingolipid ceramides into sphingosine and free fatty acids at acidic pH. Ceramides, sphingosine, and its phosphorylated form sphingosine-1-phosphate are bioactive lipids that mediate cellular signaling pathways regulating several biological processes including cell proliferation, apoptosis and differentiation. Has a higher catalytic efficiency towards C12-ceramides versus other ceramides. Also catalyzes the reverse reaction allowing the synthesis of ceramides from fatty acids and sphingosine. For the reverse synthetic reaction, the natural sphingosine D-erythro isomer is more efficiently utilized as a substrate compared to D-erythro-dihydrosphingosine and D-erythro-phytosphingosine, while the fatty acids with chain lengths of 12 or 14 carbons are the most efficiently used. Also has an N-acylethanolamine hydrolase activity. By regulating the levels of ceramides, sphingosine and sphingosine-1-phosphate in the epidermis, mediates the calcium-induced differentiation of epidermal keratinocytes. Also indirectly regulates tumor necrosis factor/TNF-induced apoptosis. By regulating the intracellular balance between ceramides and sphingosine, in adrenocortical cells, probably also acts as a regulator of steroidogenesis. The chain is Acid ceramidase from Pan troglodytes (Chimpanzee).